Reading from the N-terminus, the 281-residue chain is MADPSFASGRLGSRLQGSIAMIAEELLRAGRLDDALKALQEQVRSQPSNATLRIFLFQLLAVMGQWARAQNQLKVVGELDASALPMVQTYSTAIDCEALRREVFAGRLTPVILGQPAEWIAPLLQALSLDAEGHGEAAQALREQAFDAAPAVPGRIGEAPFAWLADADTRLGPVLEVIVNGRYAWLPMSNLRSLKVEAPSDLRDLVWLPAELTLANGGATVALLPARYAETVEHGDDAARLGRKTEWLDSGLPVGQRLFVTDAGETALFDLRELDFEPTDA.

As to quaternary structure, interacts with TssB1 (via N-terminus). Interacts with ClpV1.

Component of the H1 type VI (H1-T6SS) secretion system that plays a role in the release of toxins targeting both eukaryotic and prokaryotic species. Forms a stable complex with TssB1. This complex, although not crucial for the H1-T6SS function, may fine-tune the assembly of the system. Plays a role in the interaction between ClpV1 and the TssC1/TssB1 sheath. This is Type VI secretion system accessory component TagJ from Pseudomonas aeruginosa (strain ATCC 15692 / DSM 22644 / CIP 104116 / JCM 14847 / LMG 12228 / 1C / PRS 101 / PAO1).